Reading from the N-terminus, the 394-residue chain is 8-amino-7-oxononanoate synthase (394 aa).

R21 contacts substrate. Pyridoxal 5'-phosphate is bound at residue G112–Y113. H137 is a binding site for substrate. Pyridoxal 5'-phosphate-binding residues include S183, H211, and T239. K242 carries the N6-(pyridoxal phosphate)lysine modification. Position 358 (T358) interacts with substrate.

This sequence belongs to the class-II pyridoxal-phosphate-dependent aminotransferase family. BioF subfamily. Homodimer. Requires pyridoxal 5'-phosphate as cofactor.

It catalyses the reaction 6-carboxyhexanoyl-[ACP] + L-alanine + H(+) = (8S)-8-amino-7-oxononanoate + holo-[ACP] + CO2. Its pathway is cofactor biosynthesis; biotin biosynthesis. In terms of biological role, catalyzes the decarboxylative condensation of pimeloyl-[acyl-carrier protein] and L-alanine to produce 8-amino-7-oxononanoate (AON), [acyl-carrier protein], and carbon dioxide. The chain is 8-amino-7-oxononanoate synthase from Burkholderia pseudomallei (strain K96243).